Here is a 317-residue protein sequence, read N- to C-terminus: Olfactory receptor 2F1 (317 aa).

Over 1-24 (MGTDNQTWVSEFILLGLSSDWDTR) the chain is Extracellular. Residue N5 is glycosylated (N-linked (GlcNAc...) asparagine). A helical transmembrane segment spans residues 25–48 (VSLFVLFLVMYVVTVLGNCLIVLL). The Cytoplasmic portion of the chain corresponds to 49–57 (IRLDSRLHT). Residues 58–79 (PMYFFLTNLSLVDVSYATSVVP) traverse the membrane as a helical segment. The Extracellular segment spans residues 80–100 (QLLAHFLAEHKAIPFQSCAAQ). Residues C97 and C189 are joined by a disulfide bond. The chain crosses the membrane as a helical span at residues 101–120 (LFFSLALGGIEFVLLAVMAY). Residues 121 to 139 (DRYVAVCDALRYSAIMHGG) are Cytoplasmic-facing. Residues 140 to 160 (LCARLAITSWVSGFISSPVQT) form a helical membrane-spanning segment. Over 161–200 (AITFQLPMCRNKFIDHISCELLAVVRLACVDTSSNEVTIM) the chain is Extracellular. A helical transmembrane segment spans residues 201–222 (VSSIVLLMTPFCLVLLSYIQII). The Cytoplasmic segment spans residues 223–236 (STILKIQSREGRKK). Residues 237–261 (AFHTCASHLTVVALCYGVAIFTYIQ) traverse the membrane as a helical segment. At 262 to 272 (PHSSPSVLQEK) the chain is on the extracellular side. The helical transmembrane segment at 273–292 (LFSVFYAILTPMLNPMIYSL) threads the bilayer. Over 293–317 (RNKEVKGAWQKLLWKFSGLTSKLAT) the chain is Cytoplasmic.

Belongs to the G-protein coupled receptor 1 family.

The protein resides in the cell membrane. Odorant receptor. The polypeptide is Olfactory receptor 2F1 (OR2F1) (Homo sapiens (Human)).